A 488-amino-acid chain; its full sequence is Glutamyl-tRNA(Gln) amidotransferase subunit A (488 aa).

Catalysis depends on charge relay system residues K77 and S152. The active-site Acyl-ester intermediate is S176.

Belongs to the amidase family. GatA subfamily. In terms of assembly, heterotrimer of A, B and C subunits.

It catalyses the reaction L-glutamyl-tRNA(Gln) + L-glutamine + ATP + H2O = L-glutaminyl-tRNA(Gln) + L-glutamate + ADP + phosphate + H(+). Allows the formation of correctly charged Gln-tRNA(Gln) through the transamidation of misacylated Glu-tRNA(Gln) in organisms which lack glutaminyl-tRNA synthetase. The reaction takes place in the presence of glutamine and ATP through an activated gamma-phospho-Glu-tRNA(Gln). This chain is Glutamyl-tRNA(Gln) amidotransferase subunit A, found in Streptococcus agalactiae serotype III (strain NEM316).